The primary structure comprises 336 residues: UPF0324 membrane protein BR0028/BS1330_I0028 (336 aa).

The next 11 membrane-spanning stretches (helical) occupy residues 9–26, 36–55, 68–90, 94–116, 128–150, 160–182, 189–211, 221–240, 247–269, 279–301, and 313–335; these read ILPGLGLSVAITAAAMVL, RAWLEALVIAILLGTAVRSL, FSAKLLLEIAVALLGASISASAV, GSGLIFGIAAVVAVAITLSYGIG, LVACGNSICGNSAIAAMAPVIGA, AFTAILGVIVVLTLPLLVPLLGL, ILAGLTVYAVPQVLAATAPVSLL, LVRVLMLGPVILVFALISGN, PGFFQLVPWFIIGFLAMMALHSL, AIQYASMLLTIISMAALGLGVDI, and LTAILSLIALCCISLGLIHMLGV.

The protein belongs to the UPF0324 family.

It localises to the cell membrane. In Brucella suis biovar 1 (strain 1330), this protein is UPF0324 membrane protein BR0028/BS1330_I0028.